We begin with the raw amino-acid sequence, 263 residues long: Hydroxyethylthiazole kinase (263 aa).

Met39 contacts substrate. The ATP site is built by Lys115 and Thr160. Substrate is bound at residue Gly187.

Belongs to the Thz kinase family. It depends on Mg(2+) as a cofactor.

The enzyme catalyses 5-(2-hydroxyethyl)-4-methylthiazole + ATP = 4-methyl-5-(2-phosphooxyethyl)-thiazole + ADP + H(+). Its pathway is cofactor biosynthesis; thiamine diphosphate biosynthesis; 4-methyl-5-(2-phosphoethyl)-thiazole from 5-(2-hydroxyethyl)-4-methylthiazole: step 1/1. Functionally, catalyzes the phosphorylation of the hydroxyl group of 4-methyl-5-beta-hydroxyethylthiazole (THZ). This is Hydroxyethylthiazole kinase from Staphylococcus haemolyticus (strain JCSC1435).